We begin with the raw amino-acid sequence, 146 residues long: Protein archease (146 aa).

Asp-16, Asp-145, and Ile-146 together coordinate Ca(2+).

Belongs to the archease family.

Its function is as follows. Activates the tRNA-splicing ligase complex by facilitating the enzymatic turnover of catalytic subunit RtcB. Acts by promoting the guanylylation of RtcB, a key intermediate step in tRNA ligation. Can also alter the NTP specificity of RtcB such that ATP, dGTP or ITP is used efficiently. The sequence is that of Protein archease from Methanosarcina mazei (strain ATCC BAA-159 / DSM 3647 / Goe1 / Go1 / JCM 11833 / OCM 88) (Methanosarcina frisia).